Here is a 156-residue protein sequence, read N- to C-terminus: MSSNKINKKSIARIAAVQAIYQNILQNNDDMDDIMQNVLSFYQNNNSITDLPENLKISLSISHFKMLVKSVFENIHKLDEIIDNHLTNDKDPAHMPILLRALLRVSICELLFCPTTPAKVVINEYTDIANDMLNEHEIGFVNSVLDKIAKEHIRLI.

This sequence belongs to the NusB family.

In terms of biological role, involved in transcription antitermination. Required for transcription of ribosomal RNA (rRNA) genes. Binds specifically to the boxA antiterminator sequence of the ribosomal RNA (rrn) operons. The chain is Transcription antitermination protein NusB from Rickettsia africae (strain ESF-5).